The following is a 542-amino-acid chain: Esterase S (542 aa).

A signal peptide spans 1 to 22 (MTQILLPIALLCLFAASTLSNP). A disulfide bridge connects residues Cys-81 and Cys-100. N-linked (GlcNAc...) asparagine glycosylation occurs at Asn-110. The active-site Acyl-ester intermediate is the Ser-204. Cys-256 and Cys-268 are oxidised to a cystine. Asn-396 carries N-linked (GlcNAc...) asparagine glycosylation. An intrachain disulfide couples Cys-507 to Cys-528.

Belongs to the type-B carboxylesterase/lipase family. Monomer. As to expression, specifically expressed in the ejaculatory bulbs of male.

The protein localises to the secreted. It catalyses the reaction a carboxylic ester + H2O = an alcohol + a carboxylate + H(+). Transferred from the ejaculatory bulbs of males to the female genitals upon copulation, plays an important role in the reproductive biology. This chain is Esterase S (EstS), found in Drosophila virilis (Fruit fly).